The chain runs to 29 residues: Cyclotide psyleio D (29 aa).

The segment at residues 1–29 (GLPVCGESCFGGTCNTPGCSCTWPVCTRD) is a cross-link (cyclopeptide (Gly-Asp)). 3 disulfides stabilise this stretch: Cys-5-Cys-19, Cys-9-Cys-21, and Cys-14-Cys-26.

This is a cyclic peptide.

In terms of biological role, probably participates in a plant defense mechanism. The chain is Cyclotide psyleio D from Psychotria brachyceras.